We begin with the raw amino-acid sequence, 576 residues long: Arginine--tRNA ligase (576 aa).

Residues 122–132 (PNVAKEMHVGH) carry the 'HIGH' region motif.

Belongs to the class-I aminoacyl-tRNA synthetase family. In terms of assembly, monomer.

The protein localises to the cytoplasm. The enzyme catalyses tRNA(Arg) + L-arginine + ATP = L-arginyl-tRNA(Arg) + AMP + diphosphate. This chain is Arginine--tRNA ligase, found in Serratia proteamaculans (strain 568).